A 155-amino-acid chain; its full sequence is SsrA-binding protein (155 aa).

Belongs to the SmpB family.

It localises to the cytoplasm. In terms of biological role, required for rescue of stalled ribosomes mediated by trans-translation. Binds to transfer-messenger RNA (tmRNA), required for stable association of tmRNA with ribosomes. tmRNA and SmpB together mimic tRNA shape, replacing the anticodon stem-loop with SmpB. tmRNA is encoded by the ssrA gene; the 2 termini fold to resemble tRNA(Ala) and it encodes a 'tag peptide', a short internal open reading frame. During trans-translation Ala-aminoacylated tmRNA acts like a tRNA, entering the A-site of stalled ribosomes, displacing the stalled mRNA. The ribosome then switches to translate the ORF on the tmRNA; the nascent peptide is terminated with the 'tag peptide' encoded by the tmRNA and targeted for degradation. The ribosome is freed to recommence translation, which seems to be the essential function of trans-translation. This is SsrA-binding protein from Bacillus cereus (strain ATCC 10987 / NRS 248).